The following is a 297-amino-acid chain: F-box only protein 2 (297 aa).

Residues 1–42 (MDGDGDPESVGQPEEASPEEQQEEACAEEANGGEERPEDDGE) form a disordered region. A compositionally biased stretch (acidic residues) spans 16–27 (ASPEEQQEEACA). The 48-residue stretch at 45 to 92 (AAYLDELPEPLLLRVLAELPAAQLVQACRLVCLRWKELVDGAPLWLLK) folds into the F-box domain. Residues 114–297 (FYFLSKRRRN…VTNSSVWVEP (184 aa)) enclose the FBA domain. A carbohydrate-binding positions include 211-213 (RRD) and 279-280 (YW).

In terms of assembly, component of the SCF(FBXO2) complex consisting of CUL1, RBX1, SKP1 and FBXO2. Predominantly detected as heterodimer with SKP1; the heterodimer with SKP1 is not part of the SCF(FBXO2) complex.

Its subcellular location is the cytoplasm. It is found in the microsome membrane. The protein operates within protein modification; protein ubiquitination. Substrate recognition component of a SCF (SKP1-CUL1-F-box protein) E3 ubiquitin-protein ligase complex that mediates the ubiquitination and subsequent proteasomal degradation of target proteins. Involved in the endoplasmic reticulum-associated degradation pathway (ERAD) for misfolded lumenal proteins by recognizing and binding sugar chains on unfolded glycoproteins that are retrotranslocated into the cytosol and promoting their ubiquitination and subsequent degradation. Prevents formation of cytosolic aggregates of unfolded glycoproteins that have been retrotranslocated into the cytosol. Able to recognize and bind denatured glycoproteins, preferentially those of the high-mannose type. This is F-box only protein 2 (FBXO2) from Bos taurus (Bovine).